Consider the following 148-residue polypeptide: MLLNKSLLLLVAFVFAIVSATTYSEFKITGTNPLTQETCDPSIVYTSQNGACQGVCGMFGKLVATSNSTQFNVEMYGSAGCVGPLGTTGLTCLPNEQVIKVTETISVVCFADKDEPSGDDSSGDDSSAAATMIASFSAILIALLFALL.

A signal peptide spans M1–A20. Residue N67 is glycosylated (N-linked (GlcNAc...) asparagine). A lipid anchor (GPI-like-anchor amidated aspartate) is attached at D125. The propeptide at S126 to L148 is removed in mature form.

Belongs to the ponticulin family. The GPI-like-anchor contains a phosphoceramide group, rather than a phosphatidyl group.

Its subcellular location is the cell membrane. This is Ponticulin-like protein D (ponD) from Dictyostelium discoideum (Social amoeba).